The primary structure comprises 412 residues: GATOR complex protein NPRL2 (412 aa).

It belongs to the NPR2 family. In terms of assembly, component of the GATOR complex consisting of mio, Nup44A/Seh1, Im11, Nplr3, Nplr2, Wdr24, Wdr59 and Sec13. Within the GATOR complex, probable component of the GATOR1 subcomplex which is likely composed of Iml1, Nplr2 and Nplr3. Interacts with Nprl3.

Its subcellular location is the cytoplasm. The protein localises to the lysosome. An essential component of the GATOR subcomplex GATOR1 which functions as an inhibitor of the amino acid-sensing branch of the TORC1 signaling pathway. The two GATOR subcomplexes, GATOR1 and GATOR2, regulate the TORC1 pathway in order to mediate metabolic homeostasis, female gametogenesis and the response to amino acid limitation and complete starvation. The function of GATOR1 in negatively regulating the TORC1 pathway is essential for maintaining baseline levels of TORC1 activity under nutrient rich conditions, and for promoting survival during amino acid or complete starvation by inhibiting TORC1-dependent cell growth and promoting catabolic metabolism and autophagy. In addition, this inhibition of TORC1 is necessary to maintain female fertility under normal conditions and during periods of nutrient stress. GATOR1 and GATOR2 act at different stages of oogenesis to regulate TORC1 in order to control meiotic entry and promote oocyte growth and development. After exactly four mitotic cyst divisions, the GATOR1 complex members (Iml1, Nprl2 and Nprl3) down-regulate TORC1 to slow cellular metabolism and promote the mitotic/meiotic transition. At later stages of oogenesis, the mio and Nup44A components of the GATOR2 complex inhibit GATOR1 and thus activate TORC1 to promote meiotic progression, and drive oocyte growth and development. This is GATOR complex protein NPRL2 from Drosophila melanogaster (Fruit fly).